The sequence spans 216 residues: FMN-dependent NADH:quinone oxidoreductase (216 aa).

FMN contacts are provided by residues 15–17 (SVS) and 139–142 (SRGG).

Belongs to the azoreductase type 1 family. In terms of assembly, homodimer. Requires FMN as cofactor.

The catalysed reaction is 2 a quinone + NADH + H(+) = 2 a 1,4-benzosemiquinone + NAD(+). It carries out the reaction N,N-dimethyl-1,4-phenylenediamine + anthranilate + 2 NAD(+) = 2-(4-dimethylaminophenyl)diazenylbenzoate + 2 NADH + 2 H(+). Functionally, quinone reductase that provides resistance to thiol-specific stress caused by electrophilic quinones. Also exhibits azoreductase activity. Catalyzes the reductive cleavage of the azo bond in aromatic azo compounds to the corresponding amines. The polypeptide is FMN-dependent NADH:quinone oxidoreductase (Acidovorax ebreus (strain TPSY) (Diaphorobacter sp. (strain TPSY))).